A 215-amino-acid polypeptide reads, in one-letter code: Elongation factor Ts (215 aa).

Positions 80–83 (TDFV) are involved in Mg(2+) ion dislocation from EF-Tu.

The protein belongs to the EF-Ts family.

The protein localises to the cytoplasm. Functionally, associates with the EF-Tu.GDP complex and induces the exchange of GDP to GTP. It remains bound to the aminoacyl-tRNA.EF-Tu.GTP complex up to the GTP hydrolysis stage on the ribosome. This is Elongation factor Ts from Alkaliphilus metalliredigens (strain QYMF).